Here is a 230-residue protein sequence, read N- to C-terminus: 2-C-methyl-D-erythritol 4-phosphate cytidylyltransferase (230 aa).

This sequence belongs to the IspD/TarI cytidylyltransferase family. IspD subfamily.

The catalysed reaction is 2-C-methyl-D-erythritol 4-phosphate + CTP + H(+) = 4-CDP-2-C-methyl-D-erythritol + diphosphate. The protein operates within isoprenoid biosynthesis; isopentenyl diphosphate biosynthesis via DXP pathway; isopentenyl diphosphate from 1-deoxy-D-xylulose 5-phosphate: step 2/6. Functionally, catalyzes the formation of 4-diphosphocytidyl-2-C-methyl-D-erythritol from CTP and 2-C-methyl-D-erythritol 4-phosphate (MEP). The protein is 2-C-methyl-D-erythritol 4-phosphate cytidylyltransferase of Nocardia farcinica (strain IFM 10152).